The following is a 108-amino-acid chain: FK506-binding protein 1A (108 aa).

Residues 1-20 are disordered; it reads MGVEVQRISPGDGKNFPKPG. The 89-residue stretch at 20–108 folds into the PPIase FKBP-type domain; that stretch reads GDTVSIHYTG…TFEVELLKIN (89 aa).

This sequence belongs to the FKBP-type PPIase family. FKBP1 subfamily.

Its subcellular location is the cytoplasm. The enzyme catalyses [protein]-peptidylproline (omega=180) = [protein]-peptidylproline (omega=0). With respect to regulation, inhibited by both FK506 and rapamycin. In terms of biological role, PPIases accelerate the folding of proteins. It catalyzes the cis-trans isomerization of proline imidic peptide bonds in oligopeptides. In Emericella nidulans (strain FGSC A4 / ATCC 38163 / CBS 112.46 / NRRL 194 / M139) (Aspergillus nidulans), this protein is FK506-binding protein 1A (fprA).